The sequence spans 326 residues: HTH-type transcriptional regulator SyrM (326 aa).

An HTH lysR-type domain is found at 32 to 89 (IDLNLLVDLEALLQYRHITQAAQHVGRSQPAMSRALSRLRGMLKDDLLVAGSRGLVLT). The H-T-H motif DNA-binding region spans 49–68 (ITQAAQHVGRSQPAMSRALS).

This sequence belongs to the LysR transcriptional regulatory family.

Acts in trans to stimulate nod gene expression via nodD3 and exo gene expression via SyrA. This is HTH-type transcriptional regulator SyrM (syrM) from Rhizobium meliloti (strain 1021) (Ensifer meliloti).